The primary structure comprises 80 residues: Large ribosomal subunit protein bL31 (80 aa).

This sequence belongs to the bacterial ribosomal protein bL31 family. Type A subfamily. Part of the 50S ribosomal subunit.

In terms of biological role, binds the 23S rRNA. The chain is Large ribosomal subunit protein bL31 from Nostoc punctiforme (strain ATCC 29133 / PCC 73102).